The following is a 348-amino-acid chain: Aminotransferase atnJ (348 aa).

R79 serves as a coordination point for pyridoxal 5'-phosphate. K180 carries the N6-(pyridoxal phosphate)lysine modification. E216 provides a ligand contact to pyridoxal 5'-phosphate.

This sequence belongs to the class-IV pyridoxal-phosphate-dependent aminotransferase family. Pyridoxal 5'-phosphate serves as cofactor.

It participates in secondary metabolite biosynthesis. Aminotransferase; part of the gene cluster that mediates the biosynthesis of aspercryptins, linear lipopeptides built from six amino acids including 2 highly unusual and nonproteogenic amino acids, 2-amino-octanoic acid (2aoa) and 2-amino-dodecanol (2adol). The core structure of aspercryptins is as follows: Ser/Ala-Thr-Ile/Val-2aoa-Asn-2adol. The first step of aspercryptin biosynthesis is the generation of the fatty acid precursors, octanoic and dodecanoic acids, by the FAS subunits atnF and atnM. The fatty acid precursors are likely transformed into the corresponding alpha-amino fatty acids in three steps. First, they are hydroxylated by the cytochrome P450 monooxygenase atnE, then oxidized to the corresponding alpha-keto acids by the NAD(P)-dependent oxidoreductase atnD, and finally converted to the alpha-amino fatty acids by the PLP-dependent aminotransferases atnH or atnJ. the alpha-amino fatty acids, 2-amino-octanoic and 2-amino-dodecanoic acids, are recognized, activated, and covalently tethered to the NRPS atnA by its fourth and sixth adenylation domains. The second module of atnA is the Thr module and contains an epimerase (E) domain responsible for the epimerization of Thr to D-allo-Thr. Additionally, despite atnA having only one epimerase domain, the first amino acid of aspercryptin A1 is D-Ser, suggesting that serine is either loaded directly as D-Ser on the first module or that the epimerase domain in the threonine module epimerizes both L-Ser and L-Thr. After condensation of the hexapeptide of aspercryptin, the C-terminal reductase (TE) domain might be involved in the reductive release and production of the aldehyde hexapeptide. Further reduction would generate aspercryptins. The variety of aspercryptins produced reflects the flexibility of the atnA NRPS, allowing incorporation of alanine instead of serine, valine for isoleucine, and a C10 fatty amino alcohol instead of the C12 version. AtnB seems to be involved in the selectivity for Ile versus Val by the third module. Moreover, type B, C and D aspercryptins have an additional N-terminal cichorine, acetyl and propionyl group respectively. The protein is Aminotransferase atnJ of Emericella nidulans (strain FGSC A4 / ATCC 38163 / CBS 112.46 / NRRL 194 / M139) (Aspergillus nidulans).